A 90-amino-acid polypeptide reads, in one-letter code: Putative antitoxin VapB8 (90 aa).

Residues 1-56 (MEKSRCHAVAHGGGCAGSAKSHKSGGRCGQGRGAGDSHGTRGAGRRYRAASAPHPL) form a disordered region. Residues 26–36 (GRCGQGRGAGD) show a composition bias toward gly residues.

In terms of biological role, antitoxin component of a possible type II toxin-antitoxin (TA) system. The cognate toxin is VapC8. The protein is Putative antitoxin VapB8 (vapB8) of Mycobacterium tuberculosis (strain ATCC 25618 / H37Rv).